Here is a 364-residue protein sequence, read N- to C-terminus: Pectinesterase (364 aa).

An N-terminal signal peptide occupies residues 1-22 (MSCIAVEAVLLGILLYIPIVLS). N-linked (GlcNAc...) asparagine glycosylation is present at Asn-103. Residue Asp-220 is part of the active site.

The protein resides in the secreted. The enzyme catalyses [(1-&gt;4)-alpha-D-galacturonosyl methyl ester](n) + n H2O = [(1-&gt;4)-alpha-D-galacturonosyl](n) + n methanol + n H(+). Its pathway is glycan metabolism; pectin degradation; 2-dehydro-3-deoxy-D-gluconate from pectin: step 1/5. In terms of biological role, catalyzes the demethylesterification of homogalacturonan components of pectin. The polypeptide is Pectinesterase (Parthenium hysterophorus (Santa Maria feverfew)).